We begin with the raw amino-acid sequence, 424 residues long: Histidine--tRNA ligase (424 aa).

This sequence belongs to the class-II aminoacyl-tRNA synthetase family. As to quaternary structure, homodimer.

The protein localises to the cytoplasm. The catalysed reaction is tRNA(His) + L-histidine + ATP = L-histidyl-tRNA(His) + AMP + diphosphate + H(+). This Desulfitobacterium hafniense (strain DSM 10664 / DCB-2) protein is Histidine--tRNA ligase.